A 146-amino-acid polypeptide reads, in one-letter code: Large ribosomal subunit protein uL15 (146 aa).

Basic and acidic residues predominate over residues 1–18; that stretch reads MKLHELKPSEGSRKERNR. A disordered region spans residues 1–50; the sequence is MKLHELKPSEGSRKERNRVGRGTGSGNGKTSGRGHKGQKARSGGGVRLGF. The segment covering 21–31 has biased composition (gly residues); that stretch reads RGTGSGNGKTS.

The protein belongs to the universal ribosomal protein uL15 family. In terms of assembly, part of the 50S ribosomal subunit.

Its function is as follows. Binds to the 23S rRNA. This Listeria welshimeri serovar 6b (strain ATCC 35897 / DSM 20650 / CCUG 15529 / CIP 8149 / NCTC 11857 / SLCC 5334 / V8) protein is Large ribosomal subunit protein uL15.